Consider the following 205-residue polypeptide: Molybdopterin synthase catalytic subunit (205 aa).

The segment at 1 to 36 (MQHPTLQPEVDPNPVVSSSSSSSSSNPLPAHLNPAN) is disordered. Residues 146 to 147 (HR), Lys-162, and 169 to 171 (KRE) contribute to the substrate site. Residues 179–205 (GEGEGEWRANRDTDSQGNCRGDKVAEG) form a disordered region. Positions 183 to 205 (GEWRANRDTDSQGNCRGDKVAEG) are enriched in basic and acidic residues.

This sequence belongs to the MoaE family. MOCS2B subfamily. As to quaternary structure, heterotetramer; composed of 2 small (MOCS2A) and 2 large (MOCS2B) subunits.

It is found in the cytoplasm. It catalyses the reaction 2 [molybdopterin-synthase sulfur-carrier protein]-C-terminal-Gly-aminoethanethioate + cyclic pyranopterin phosphate + H2O = molybdopterin + 2 [molybdopterin-synthase sulfur-carrier protein]-C-terminal Gly-Gly + 2 H(+). Its pathway is cofactor biosynthesis; molybdopterin biosynthesis. Functionally, catalytic subunit of the molybdopterin synthase complex, a complex that catalyzes the conversion of precursor Z into molybdopterin. Acts by mediating the incorporation of 2 sulfur atoms from thiocarboxylated MOCS2A into precursor Z to generate a dithiolene group. The chain is Molybdopterin synthase catalytic subunit from Ajellomyces capsulatus (strain NAm1 / WU24) (Darling's disease fungus).